The following is a 148-amino-acid chain: Lysozyme C (148 aa).

The signal sequence occupies residues 1–18; the sequence is MKAVIILGLVLLSVTVQG. The C-type lysozyme domain maps to 19–148; that stretch reads KIFERCELAR…VSQYVQGCGV (130 aa). Disulfide bonds link cysteine 24–cysteine 146, cysteine 48–cysteine 134, cysteine 83–cysteine 99, and cysteine 95–cysteine 113. Active-site residues include glutamate 53 and aspartate 71.

Belongs to the glycosyl hydrolase 22 family. Monomer.

It carries out the reaction Hydrolysis of (1-&gt;4)-beta-linkages between N-acetylmuramic acid and N-acetyl-D-glucosamine residues in a peptidoglycan and between N-acetyl-D-glucosamine residues in chitodextrins.. Functionally, lysozymes have primarily a bacteriolytic function; those in tissues and body fluids are associated with the monocyte-macrophage system and enhance the activity of immunoagents. The chain is Lysozyme C (LYZ) from Allenopithecus nigroviridis (Allen's swamp monkey).